A 401-amino-acid chain; its full sequence is Diphosphomevalonate decarboxylase (401 aa).

An N-acetylalanine modification is found at alanine 2. Residues 24-27, arginine 79, 157-162, and threonine 213 contribute to the (R)-5-diphosphomevalonate site; these read YWGK and SGSACR. The tract at residues 382-401 is disordered; sequence VLDDPHHHLLGPDGLPQRDL.

It belongs to the diphosphomevalonate decarboxylase family. Homodimer.

The protein resides in the cytoplasm. It catalyses the reaction (R)-5-diphosphomevalonate + ATP = isopentenyl diphosphate + ADP + phosphate + CO2. It functions in the pathway steroid biosynthesis; cholesterol biosynthesis. Functionally, catalyzes the ATP dependent decarboxylation of (R)-5-diphosphomevalonate to form isopentenyl diphosphate (IPP). Functions in the mevalonate (MVA) pathway leading to isopentenyl diphosphate (IPP), a key precursor for the biosynthesis of isoprenoids and sterol synthesis. The protein is Diphosphomevalonate decarboxylase (Mvd) of Rattus norvegicus (Rat).